A 752-amino-acid chain; its full sequence is Primary amine oxidase (752 aa).

The N-terminal stretch at 1 to 27 is a signal peptide; the sequence is MAILSPRKTALALAVALSCAWQSPAFA. Residues 408 to 419 and 490 to 495 each bind substrate; these read YLDSGDYGMGTL and VGNYDY. Asp-410 functions as the Proton acceptor in the catalytic mechanism. The Schiff-base intermediate with substrate; via topaquinone role is filled by Tyr-493. The residue at position 493 (Tyr-493) is a 2',4',5'-topaquinone. His-551 and His-553 together coordinate Cu cation. Ca(2+) contacts are provided by Asp-560, Leu-561, Asp-562, Glu-600, Tyr-694, Asp-697, Glu-699, and Asp-705. Asp-560 contacts Mn(2+). Residue Asp-562 participates in Mn(2+) binding. Asp-705 contacts Mn(2+). His-716 is a Cu cation binding site.

This sequence belongs to the copper/topaquinone oxidase family. Homodimer. Cu cation is required as a cofactor. Requires Ca(2+) as cofactor. The cofactor is L-topaquinone. It depends on Mn(2+) as a cofactor. Post-translationally, topaquinone (TPQ) is generated by copper-dependent autoxidation of a specific tyrosyl residue.

Its subcellular location is the periplasm. The enzyme catalyses a primary methyl amine + O2 + H2O = an aldehyde + H2O2 + NH4(+). Functionally, active on tyramine, tryptamine, beta-phenethylamine and dopamine. In Klebsiella michiganensis (strain ATCC 8724 / DSM 4798 / JCM 20051 / NBRC 3318 / NRRL B-199 / KCTC 1686 / BUCSAV 143 / CCM 1901), this protein is Primary amine oxidase (maoA).